The primary structure comprises 116 residues: Holo-[acyl-carrier-protein] synthase (116 aa).

Residues aspartate 5 and glutamate 50 each coordinate Mg(2+).

This sequence belongs to the P-Pant transferase superfamily. AcpS family. Mg(2+) is required as a cofactor.

The protein localises to the cytoplasm. It carries out the reaction apo-[ACP] + CoA = holo-[ACP] + adenosine 3',5'-bisphosphate + H(+). In terms of biological role, transfers the 4'-phosphopantetheine moiety from coenzyme A to a Ser of acyl-carrier-protein. The protein is Holo-[acyl-carrier-protein] synthase of Campylobacter lari (strain RM2100 / D67 / ATCC BAA-1060).